The primary structure comprises 295 residues: ATP synthase gamma chain (295 aa).

Belongs to the ATPase gamma chain family. F-type ATPases have 2 components, CF(1) - the catalytic core - and CF(0) - the membrane proton channel. CF(1) has five subunits: alpha(3), beta(3), gamma(1), delta(1), epsilon(1). CF(0) has three main subunits: a, b and c.

The protein resides in the cell inner membrane. In terms of biological role, produces ATP from ADP in the presence of a proton gradient across the membrane. The gamma chain is believed to be important in regulating ATPase activity and the flow of protons through the CF(0) complex. The polypeptide is ATP synthase gamma chain (Bdellovibrio bacteriovorus (strain ATCC 15356 / DSM 50701 / NCIMB 9529 / HD100)).